A 318-amino-acid chain; its full sequence is tRNA dimethylallyltransferase (318 aa).

ATP is bound at residue 28–35; that stretch reads GPTGAGKS. 30–35 contacts substrate; the sequence is TGAGKS. The interaction with substrate tRNA stretch occupies residues 53 to 56; the sequence is DSMQ.

The protein belongs to the IPP transferase family. In terms of assembly, monomer. Mg(2+) serves as cofactor.

The enzyme catalyses adenosine(37) in tRNA + dimethylallyl diphosphate = N(6)-dimethylallyladenosine(37) in tRNA + diphosphate. Catalyzes the transfer of a dimethylallyl group onto the adenine at position 37 in tRNAs that read codons beginning with uridine, leading to the formation of N6-(dimethylallyl)adenosine (i(6)A). The chain is tRNA dimethylallyltransferase from Parafrankia sp. (strain EAN1pec).